The sequence spans 424 residues: UDP-sugar transporter protein SLC35A5 (424 aa).

Residues 1-8 (MEKQCCSH) are Cytoplasmic-facing. Residues 9–29 (PVICSLSTMYTFLLGAIFIAL) traverse the membrane as a helical segment. The Lumenal portion of the chain corresponds to 30 to 53 (SSSRILLVKYSANEENKYDYLPTT). A helical membrane pass occupies residues 54 to 74 (ANVCSELVKLVFCVLVSFCVI). Topologically, residues 75 to 93 (KKDHQSRNLKYASWKEFSN) are cytoplasmic. A helical transmembrane segment spans residues 94-116 (FMKWSIPAFLYFLDNLIVFYVLS). Over 117–119 (YLQ) the chain is Lumenal. A helical membrane pass occupies residues 120–142 (PAMAVIFSNFSIITTALLFRIVL). Residues 143–147 (KRRLN) are Cytoplasmic-facing. Residues 148–168 (WIQWASLLILFLSIVALTAGT) traverse the membrane as a helical segment. Over 169-228 (KTLQHNLAGHGFHHDAFFSPSNSCLLFRSECPRKDNCTAKEWTFPEAKWNTTARVFSHIR) the chain is Lumenal. An N-linked (GlcNAc...) asparagine glycan is attached at N204. A helical membrane pass occupies residues 229 to 249 (LGMGHVLIIVQCFISSMANIY). Over 250 to 263 (NEKILKEGNQLAES) the chain is Cytoplasmic. Residues 264-284 (IFIQNSKLYFFGILFNGLTLG) traverse the membrane as a helical segment. The Lumenal segment spans residues 285–303 (LQRSNRDQIKNCGFFYGHN). Residues 304–324 (AFSVALIFVTAFQGLSVAFIL) traverse the membrane as a helical segment. The Cytoplasmic segment spans residues 325 to 330 (KFLDNM). Residues 331 to 351 (FHVLMAQVTTVIITTVSVLVF) traverse the membrane as a helical segment. Residues 352-354 (DFR) are Lumenal-facing. Residues 355–375 (PSLEFFLEAPSVLLSIFIYNA) traverse the membrane as a helical segment. The Cytoplasmic segment spans residues 376-424 (SKPQGPEYAPRQERIRDLSGNLWERSSGDGEELERLTKPKSDESDEDTF). Phosphoserine is present on residues S394, S416, and S419. Positions 395 to 424 (GNLWERSSGDGEELERLTKPKSDESDEDTF) are disordered. Residues 408–417 (LERLTKPKSD) show a composition bias toward basic and acidic residues.

It belongs to the nucleotide-sugar transporter family. SLC35A subfamily. As to quaternary structure, probably forms homooligomers and heterooligomers with SLC35A1, SLC35A2, SLC35A3 and SLC35A4.

It is found in the golgi apparatus membrane. The catalysed reaction is UMP(out) + UDP-alpha-D-glucuronate(in) = UMP(in) + UDP-alpha-D-glucuronate(out). The enzyme catalyses UMP(out) + UDP-N-acetyl-alpha-D-glucosamine(in) = UMP(in) + UDP-N-acetyl-alpha-D-glucosamine(out). It carries out the reaction UDP-N-acetyl-alpha-D-galactosamine(in) + UMP(out) = UDP-N-acetyl-alpha-D-galactosamine(out) + UMP(in). Functionally, probable UDP-sugar:UMP transmembrane antiporter involved in UDP-alpha-D-glucuronate/UDP-GlcA, UDP-GlcNAc/UDP-N-acetyl-alpha-D-glucosamine and UDP-N-acetyl-alpha-D-galactosamine/UDP-GalNAc transport from the cytosol to the lumen of the Golgi. This is UDP-sugar transporter protein SLC35A5 from Pongo abelii (Sumatran orangutan).